The primary structure comprises 349 residues: Aspartate carbamoyltransferase catalytic subunit (349 aa).

Carbamoyl phosphate is bound by residues Arg-59 and Thr-60. Residue Lys-87 participates in L-aspartate binding. Arg-109, His-142, and Gln-145 together coordinate carbamoyl phosphate. The L-aspartate site is built by Arg-182 and Arg-253. 2 residues coordinate carbamoyl phosphate: Gly-294 and Pro-295.

It belongs to the aspartate/ornithine carbamoyltransferase superfamily. ATCase family. Heterododecamer (2C3:3R2) of six catalytic PyrB chains organized as two trimers (C3), and six regulatory PyrI chains organized as three dimers (R2).

It catalyses the reaction carbamoyl phosphate + L-aspartate = N-carbamoyl-L-aspartate + phosphate + H(+). Its pathway is pyrimidine metabolism; UMP biosynthesis via de novo pathway; (S)-dihydroorotate from bicarbonate: step 2/3. Catalyzes the condensation of carbamoyl phosphate and aspartate to form carbamoyl aspartate and inorganic phosphate, the committed step in the de novo pyrimidine nucleotide biosynthesis pathway. The chain is Aspartate carbamoyltransferase catalytic subunit from Synechococcus sp. (strain CC9311).